The primary structure comprises 189 residues: GMP synthase [glutamine-hydrolyzing] subunit A (189 aa).

The Glutamine amidotransferase type-1 domain maps to 1 to 189 (MIVILNNGGQ…CKKCGFGFEE (189 aa)). The Nucleophile role is filled by Cys-76. Catalysis depends on residues His-163 and Glu-165.

In terms of assembly, heterodimer composed of a glutamine amidotransferase subunit (A) and a GMP-binding subunit (B).

The enzyme catalyses XMP + L-glutamine + ATP + H2O = GMP + L-glutamate + AMP + diphosphate + 2 H(+). Its pathway is purine metabolism; GMP biosynthesis; GMP from XMP (L-Gln route): step 1/1. Its function is as follows. Catalyzes the synthesis of GMP from XMP. This chain is GMP synthase [glutamine-hydrolyzing] subunit A, found in Methanococcus maripaludis (strain DSM 14266 / JCM 13030 / NBRC 101832 / S2 / LL).